Reading from the N-terminus, the 220-residue chain is HTH-type transcriptional repressor GlaR (220 aa).

The HTH gntR-type domain maps to 1 to 69 (MTITSLDGYR…NQKGYRVASM (69 aa)). The segment at residues 29–48 (MSLLTSRYALGVGPLREALS) is a DNA-binding region (H-T-H motif).

The protein localises to the cytoplasm. With respect to regulation, the repressive effect at the glaH promoter site is specifically relieved upon glutarate binding. Negatively regulates the expression of the glaH-lhgD-gabDTP operon in a temporal manner during entry into stationary phase or during the first few hours of carbon starvation. Thereby is involved in the regulation of a L-lysine degradation pathway that proceeds via cadaverine, glutarate and L-2-hydroxyglutarate. Binds to two primary and two secondary sites in the promoter region of the glaH operon with the consensus sequences TTGTN5TTTT and ATGTN5TTTT of the primary sites, each separated by six nucleotides. The polypeptide is HTH-type transcriptional repressor GlaR (Escherichia coli (strain K12)).